A 345-amino-acid chain; its full sequence is Uroporphyrinogen decarboxylase (345 aa).

Substrate-binding positions include 26–30, Phe45, Asp75, Tyr151, Ser206, and His320; that span reads RQAGR.

Belongs to the uroporphyrinogen decarboxylase family. Homodimer.

Its subcellular location is the cytoplasm. It carries out the reaction uroporphyrinogen III + 4 H(+) = coproporphyrinogen III + 4 CO2. The protein operates within porphyrin-containing compound metabolism; protoporphyrin-IX biosynthesis; coproporphyrinogen-III from 5-aminolevulinate: step 4/4. Functionally, catalyzes the decarboxylation of four acetate groups of uroporphyrinogen-III to yield coproporphyrinogen-III. This chain is Uroporphyrinogen decarboxylase, found in Staphylococcus carnosus (strain TM300).